Here is a 225-residue protein sequence, read N- to C-terminus: Ras-related protein Rab-21 (225 aa).

N-acetylalanine is present on Ala-2. GTP contacts are provided by Gly-28, Gly-31, Lys-32, Thr-33, Ser-34, Asn-45, Asp-46, His-48, Thr-50, and Thr-51. Thr-33 is a binding site for Mg(2+). Residues 43–56 (KFNDKHITTLQASF) carry the Switch 1 motif. Thr-51 and Asp-74 together coordinate Mg(2+). Positions 76-94 (AGQERFHALGPIYYRDSNG) match the Switch 2 motif. The GTP site is built by Gly-77, Asn-132, Lys-133, Asp-135, Ala-163, and Lys-164. The segment at 188–225 (ERAKGNGSSQPGTARRGVQIIDDEPQAQTSGGGCCSSG) is disordered. S-geranylgeranyl cysteine attachment occurs at residues Cys-221 and Cys-222. At Cys-222 the chain carries Cysteine methyl ester. Residues 223–225 (SSG) constitute a propeptide, removed in mature form.

This sequence belongs to the small GTPase superfamily. Rab family. Interacts with the cytoplasmic tail of integrins ITGA1, ITGA2, ITGA5, ITGA6, ITGA11 and ITGB1. Interacts with RABGEF1 (via VPS9 domain). Interacts with ANKRD27. Interacts with VAMP7. Interacts (in GTP-bound form) with VAMP8 in response to starvation; the interaction probably regulates VAMP8 endolysosomal trafficking. Interacts (active GTP-bound form) with TMED10; the interaction is indirect and regulates TMED10 abundance and localization at the Golgi. It depends on Mg(2+) as a cofactor. Widely expressed. In jejunal tissue, predominantly expressed in the apical region of the epithelial cell layer of the villi, weak expression, if any, in the crypt epithelium. Capillary endothelium and some cell types in the lamina propria also show expression.

It localises to the endoplasmic reticulum membrane. The protein localises to the golgi apparatus. It is found in the trans-Golgi network. Its subcellular location is the golgi apparatus membrane. The protein resides in the early endosome membrane. It localises to the cytoplasmic vesicle membrane. The protein localises to the cleavage furrow. It is found in the cell projection. Its subcellular location is the neuron projection. The catalysed reaction is GTP + H2O = GDP + phosphate + H(+). Regulated by guanine nucleotide exchange factors (GEFs) including ANKRD27 and RABGEF1, which promote the exchange of bound GDP for free GTP. Regulated by GTPase activating proteins (GAPs) which increase the GTP hydrolysis activity. Inhibited by GDP dissociation inhibitors (GDIs). Its function is as follows. The small GTPases Rab are key regulators of intracellular membrane trafficking, from the formation of transport vesicles to their fusion with membranes. Rabs cycle between an inactive GDP-bound form and an active GTP-bound form that is able to recruit to membranes different sets of downstream effectors directly responsible for vesicle formation, movement, tethering and fusion. RAB21 is involved in membrane trafficking control. During the mitosis of adherent cells, controls the endosomal trafficking of integrins which is required for the successful completion of cytokinesis. Regulates integrin internalization and recycling, but does not influence the traffic of endosomally translocated receptors in general. As a result, may regulate cell adhesion and migration. Involved in neurite growth. Following SBF2/MTMT13-mediated activation in response to starvation-induced autophagy, binds to and regulates SNARE protein VAMP8 endolysosomal transport required for SNARE-mediated autophagosome-lysosome fusion. Modulates protein levels of the cargo receptors TMED2 and TMED10, and required for appropriate Golgi localization of TMED10. The protein is Ras-related protein Rab-21 of Homo sapiens (Human).